We begin with the raw amino-acid sequence, 86 residues long: Small ribosomal subunit protein bS20 (86 aa).

Residues 1–22 form a disordered region; that stretch reads MANIASARKRARQAEKNRQHNM.

It belongs to the bacterial ribosomal protein bS20 family.

Binds directly to 16S ribosomal RNA. The sequence is that of Small ribosomal subunit protein bS20 from Thioalkalivibrio sulfidiphilus (strain HL-EbGR7).